The chain runs to 350 residues: Protein RecA (350 aa).

67-74 (GPESSGKT) lines the ATP pocket.

The protein belongs to the RecA family.

The protein resides in the cytoplasm. Functionally, can catalyze the hydrolysis of ATP in the presence of single-stranded DNA, the ATP-dependent uptake of single-stranded DNA by duplex DNA, and the ATP-dependent hybridization of homologous single-stranded DNAs. It interacts with LexA causing its activation and leading to its autocatalytic cleavage. In Chlamydia felis (strain Fe/C-56) (Chlamydophila felis), this protein is Protein RecA.